The primary structure comprises 608 residues: Histone-arginine methyltransferase CARM1 (608 aa).

Ala-2 is subject to N-acetylalanine. The segment at 27 to 138 (ATVSVFPGAR…GHTLERSVFS (112 aa)) is interaction with C9orf72. The region spanning 146-453 (AVQYFQFYGY…KRQSYDISIV (308 aa)) is the SAM-dependent MTase PRMT-type domain. Positions 159, 168, 192, and 214 each coordinate S-adenosyl-L-methionine. Ser-216 is subject to Phosphoserine. Lys-227 participates in a covalent cross-link: Glycyl lysine isopeptide (Lys-Gly) (interchain with G-Cter in ubiquitin). 2 residues coordinate S-adenosyl-L-methionine: Glu-243 and Ser-271. The interval 346-379 (RILMAKSVKYTVNFLEAKEGDLHRIEIPFKFHML) is required for nuclear translocation. The tract at residues 499–608 (TGSTYNLSSG…IPTNTMHYGS (110 aa)) is transactivation domain. Arg-550 is modified (dimethylated arginine).

The protein belongs to the class I-like SAM-binding methyltransferase superfamily. Protein arginine N-methyltransferase family. As to quaternary structure, homodimer. Interacts with NR1H4. Interacts with SNRPC. Interacts with the C-terminus of NCOA2/GRIP1, NCO3/ACTR and NCOA1/SRC1. Part of a complex consisting of CARM1, EP300/P300 and NCOA2/GRIP1. Interacts with FLII, TP53, myogenic factor MEF2, EP300/P300, TRIM24, CREBBP and CTNNB1. Interacts with RELA. Identified in a complex containing CARM1, TRIM24 and NCOA2/GRIP1. Interacts with NCOA3/SRC3. Interacts with SKP2. Interacts (via PH domain-like fold) with C9orf72. Interacts with PARP1; promoting PARP1 recruimtent to replication forks. (Microbial infection) Interacts with HTLV-1 protein Tax. Post-translationally, auto-methylated on Arg-550. Methylation enhances transcription coactivator activity. Methylation is required for its role in the regulation of pre-mRNA alternative splicing. In terms of processing, phosphorylation at Ser-216 is strongly increased during mitosis, and decreases rapidly to a very low, basal level after entry into the G1 phase of the cell cycle. Phosphorylation at Ser-216 may promote location in the cytosol. Phosphorylation at Ser-216 interferes with S-adenosyl-L-methionine binding and strongly reduces methyltransferase activity. Ubiquitinated by E3 ubiquitin-protein ligase complex containing FBXO9 at Lys-227; leading to proteasomal degradation. In terms of tissue distribution, overexpressed in prostate adenocarcinomas and high-grade prostatic intraepithelial neoplasia.

The protein localises to the nucleus. The protein resides in the cytoplasm. It is found in the chromosome. It catalyses the reaction L-arginyl-[protein] + 2 S-adenosyl-L-methionine = N(omega),N(omega)-dimethyl-L-arginyl-[protein] + 2 S-adenosyl-L-homocysteine + 2 H(+). Methylation of H3R17 (H3R17me) by CARM1 is stimulated by preacetylation of H3 'Lys-18' (H3K18ac) H3 'Lys-23' (H3K23ac) by EP300 and blocked by citrullination of H3 'Arg-17' (H3R17ci) by PADI4. Methylates (mono- and asymmetric dimethylation) the guanidino nitrogens of arginyl residues in several proteins involved in DNA packaging, transcription regulation, pre-mRNA splicing, and mRNA stability. Recruited to promoters upon gene activation together with histone acetyltransferases from EP300/P300 and p160 families, methylates histone H3 at 'Arg-17' (H3R17me), forming mainly asymmetric dimethylarginine (H3R17me2a), leading to activation of transcription via chromatin remodeling. During nuclear hormone receptor activation and TCF7L2/TCF4 activation, acts synergically with EP300/P300 and either one of the p160 histone acetyltransferases NCOA1/SRC1, NCOA2/GRIP1 and NCOA3/ACTR or CTNNB1/beta-catenin to activate transcription. During myogenic transcriptional activation, acts together with NCOA3/ACTR as a coactivator for MEF2C. During monocyte inflammatory stimulation, acts together with EP300/P300 as a coactivator for NF-kappa-B. Acts as a coactivator for PPARG, promotes adipocyte differentiation and the accumulation of brown fat tissue. Plays a role in the regulation of pre-mRNA alternative splicing by methylation of splicing factors. Also seems to be involved in p53/TP53 transcriptional activation. Methylates EP300/P300, both at 'Arg-2142', which may loosen its interaction with NCOA2/GRIP1, and at 'Arg-580' and 'Arg-604' in the KIX domain, which impairs its interaction with CREB and inhibits CREB-dependent transcriptional activation. Also methylates arginine residues in RNA-binding proteins PABPC1, ELAVL1 and ELAV4, which may affect their mRNA-stabilizing properties and the half-life of their target mRNAs. Acts as a transcriptional coactivator of ACACA/acetyl-CoA carboxylase by enriching H3R17 methylation at its promoter, thereby positively regulating fatty acid synthesis. Independently of its methyltransferase activity, involved in replication fork progression: promotes PARP1 recruitment to replication forks, leading to poly-ADP-ribosylation of chromatin at replication forks and reduced fork speed. The polypeptide is Histone-arginine methyltransferase CARM1 (CARM1) (Homo sapiens (Human)).